Reading from the N-terminus, the 866-residue chain is DNA mismatch repair protein MutS (866 aa).

Residue 618 to 625 (GPNMSGKS) coordinates ATP.

It belongs to the DNA mismatch repair MutS family.

This protein is involved in the repair of mismatches in DNA. It is possible that it carries out the mismatch recognition step. This protein has a weak ATPase activity. This chain is DNA mismatch repair protein MutS, found in Flavobacterium psychrophilum (strain ATCC 49511 / DSM 21280 / CIP 103535 / JIP02/86).